Reading from the N-terminus, the 500-residue chain is UBX domain-containing protein 5 (500 aa).

Residues 50 to 61 (SNNTPTPSNSTP) show a composition bias toward low complexity. The tract at residues 50–70 (SNNTPTPSNSTPMAPTSVDSD) is disordered. At serine 139 the chain carries Phosphoserine. Disordered regions lie at residues 142–169 (NQRLDDTNTNTYINDNSSDSLDSEEEND) and 371–399 (ESLNNNSSKSNQEEVPSTGEEQKRVQEPD). Residues 148-161 (TNTNTYINDNSSDS) are compositionally biased toward low complexity. The region spanning 415 to 493 (KPGITTRIQI…GLKNSSLLLE (79 aa)) is the UBX domain.

In terms of assembly, interacts with CDC48.

It is found in the nucleus. The protein resides in the cytoplasm. Functionally, involved in CDC48-dependent protein degradation through the ubiquitin/proteasome pathway. This Saccharomyces cerevisiae (strain ATCC 204508 / S288c) (Baker's yeast) protein is UBX domain-containing protein 5 (UBX5).